A 360-amino-acid chain; its full sequence is Membrane-bound lytic murein transglycosylase C (360 aa).

A signal peptide spans 1 to 16; that stretch reads MKKFFALALVAPLLIS. Cys17 is lipidated: N-palmitoyl cysteine. Cys17 carries the S-diacylglycerol cysteine lipid modification.

This sequence belongs to the transglycosylase Slt family.

It localises to the cell outer membrane. It carries out the reaction Exolytic cleavage of the (1-&gt;4)-beta-glycosidic linkage between N-acetylmuramic acid (MurNAc) and N-acetylglucosamine (GlcNAc) residues in peptidoglycan, from either the reducing or the non-reducing ends of the peptidoglycan chains, with concomitant formation of a 1,6-anhydrobond in the MurNAc residue.. In terms of biological role, murein-degrading enzyme. May play a role in recycling of muropeptides during cell elongation and/or cell division. This is Membrane-bound lytic murein transglycosylase C from Citrobacter koseri (strain ATCC BAA-895 / CDC 4225-83 / SGSC4696).